The chain runs to 387 residues: Protein spaetzle 5 (387 aa).

An N-terminal signal peptide occupies residues 1-29 (MTKSIKRPPPFSCKQVLLTYVILAYTVAA). A propeptide spanning residues 30 to 284 (HSSPPPCGLY…PLKKRSRTKR (255 aa)) is cleaved from the precursor. Residues 133–197 (QTPFGGNPQR…SGGHLYINQS (65 aa)) are disordered. Residues N195 and N204 are each glycosylated (N-linked (GlcNAc...) asparagine). Disordered regions lie at residues 219-256 (KQRQ…QSKR) and 269-291 (GVEA…GRST). The segment covering 237–247 (QTEEAEEQDNP) has biased composition (acidic residues). Residues 276-286 (LKKRSRTKRQS) show a composition bias toward basic residues. The Spaetzle domain maps to 291 to 384 (TLCQTTSQFI…WFPSCCVCTI (94 aa)). Disulfide bonds link C293–C350, C331–C380, and C340–C382.

In terms of assembly, homodimer; disulfide-linked. In terms of tissue distribution, detected in the fan-shaped body which is a component of the locomotion center in the central nervous system (CNS) (at protein level).

In terms of biological role, neurotrophin which may function as a ligand for the Toll-related receptors Toll-6 and Toll-7. Binds to Toll-7 and Toll-6, and probably acts as their ligands in the promotion of motor axon targeting and neuronal survival in the central nervous system (CNS). Involved in synaptic targeting of ISNb/d motorneurons and also some SNa motorneurons. May be involved in the normal development of specific neurons at the neuromuscular junction. This chain is Protein spaetzle 5, found in Drosophila melanogaster (Fruit fly).